The primary structure comprises 129 residues: Ribosome-binding factor A (129 aa).

This sequence belongs to the RbfA family. In terms of assembly, monomer. Binds 30S ribosomal subunits, but not 50S ribosomal subunits or 70S ribosomes.

Its subcellular location is the cytoplasm. Its function is as follows. One of several proteins that assist in the late maturation steps of the functional core of the 30S ribosomal subunit. Associates with free 30S ribosomal subunits (but not with 30S subunits that are part of 70S ribosomes or polysomes). Required for efficient processing of 16S rRNA. May interact with the 5'-terminal helix region of 16S rRNA. The polypeptide is Ribosome-binding factor A (Azotobacter vinelandii (strain DJ / ATCC BAA-1303)).